The primary structure comprises 325 residues: Odorant receptor 131-2 (325 aa).

The Extracellular portion of the chain corresponds to 1–22 (MNSTSNSSLGNTFISKTLKEKS). Residues asparagine 2 and asparagine 6 are each glycosylated (N-linked (GlcNAc...) asparagine). A helical membrane pass occupies residues 23–43 (LTVQVLVGILLYVNGLMIFTF). Over 44-54 (LKKETFRDTRY) the chain is Cytoplasmic. Residues 55–75 (ILFAQTLFVDSALMLFADLTL) traverse the membrane as a helical segment. Topologically, residues 76-91 (VGSAYELFIHIISCYI) are extracellular. Cysteine 89 and cysteine 170 are oxidised to a cystine. Residues 92-112 (FCTVMALLSICSPVTLVAMCL) form a helical membrane-spanning segment. Residues 113–135 (ERYVAICLPLRHASISSPKNTIN) are Cytoplasmic-facing. A helical membrane pass occupies residues 136-156 (GLLIIWGVSSVIPLFIFIVSF). The Extracellular segment spans residues 157-190 (TYTPPNAMNSYVVCSNDVMFQVKWLAEMRALSQQ). Residues 191 to 211 (LLFVIMLCIVGSTYIKIMVAA) traverse the membrane as a helical segment. Residues 212–227 (KSASAENKKSTYKGLR) are Cytoplasmic-facing. Residues 228-248 (TVILHGLQLILGMMQLITPYI) form a helical membrane-spanning segment. Over 249 to 267 (DILTLKVDIMLFINVKFSN) the chain is Extracellular. The helical transmembrane segment at 268 to 285 (FMLFWIFPRCLSPLVYGL) threads the bilayer. The Cytoplasmic portion of the chain corresponds to 286–325 (RDKKFYNALKYYAFCGIYVCKKHKIKDSKTIRGAVSIAIY).

This sequence belongs to the G-protein coupled receptor 1 family. As to quaternary structure, homodimer. Monomer.

The protein resides in the cell membrane. It is found in the cytoplasm. Its function is as follows. Probable olfactory receptor. The protein is Odorant receptor 131-2 of Danio rerio (Zebrafish).